Consider the following 164-residue polypeptide: MVDDSTRKTLSNIPLLQTRAGPREKDIWVQRLKEEYQALIKYVENNKQSGSDWFRLESNKEGTKWFGKCWYMHNLLKYEFEVEFDIPVTYPTTAPEIAVPELDGKTAKMYRGGKICLTEHFKPLWARNVPKFGIAHAMALGLAPWLAVEIPDLIEKGIISYKEK.

Catalysis depends on cysteine 116, which acts as the Glycyl thioester intermediate.

The protein belongs to the ubiquitin-conjugating enzyme family. UFC1 subfamily.

Its function is as follows. E2-like enzyme which forms an intermediate with UFM1 via a thioester linkage. This Drosophila willistoni (Fruit fly) protein is Ubiquitin-fold modifier-conjugating enzyme 1.